We begin with the raw amino-acid sequence, 596 residues long: Aspartate--tRNA(Asp/Asn) ligase (596 aa).

Glu175 lines the L-aspartate pocket. Positions 199 to 202 (QQYK) are aspartate. Residues Arg221 and His454 each coordinate L-aspartate. 221-223 (RDE) is a binding site for ATP. Glu488 lines the ATP pocket. Arg495 lines the L-aspartate pocket. 540-543 (GIDR) is a binding site for ATP.

The protein belongs to the class-II aminoacyl-tRNA synthetase family. Type 1 subfamily. As to quaternary structure, homodimer.

The protein localises to the cytoplasm. It carries out the reaction tRNA(Asx) + L-aspartate + ATP = L-aspartyl-tRNA(Asx) + AMP + diphosphate. In terms of biological role, aspartyl-tRNA synthetase with relaxed tRNA specificity since it is able to aspartylate not only its cognate tRNA(Asp) but also tRNA(Asn). Reaction proceeds in two steps: L-aspartate is first activated by ATP to form Asp-AMP and then transferred to the acceptor end of tRNA(Asp/Asn). This is Aspartate--tRNA(Asp/Asn) ligase from Rhizobium johnstonii (strain DSM 114642 / LMG 32736 / 3841) (Rhizobium leguminosarum bv. viciae).